The primary structure comprises 458 residues: ATP synthase subunit beta (458 aa).

148 to 155 (GGAGVGKT) provides a ligand contact to ATP.

This sequence belongs to the ATPase alpha/beta chains family. As to quaternary structure, F-type ATPases have 2 components, CF(1) - the catalytic core - and CF(0) - the membrane proton channel. CF(1) has five subunits: alpha(3), beta(3), gamma(1), delta(1), epsilon(1). CF(0) has three main subunits: a(1), b(2) and c(9-12). The alpha and beta chains form an alternating ring which encloses part of the gamma chain. CF(1) is attached to CF(0) by a central stalk formed by the gamma and epsilon chains, while a peripheral stalk is formed by the delta and b chains.

The protein resides in the cell inner membrane. The enzyme catalyses ATP + H2O + 4 H(+)(in) = ADP + phosphate + 5 H(+)(out). Its function is as follows. Produces ATP from ADP in the presence of a proton gradient across the membrane. The catalytic sites are hosted primarily by the beta subunits. In Francisella tularensis subsp. holarctica (strain FTNF002-00 / FTA), this protein is ATP synthase subunit beta.